A 694-amino-acid chain; its full sequence is Long-chain-fatty-acid--CoA ligase 4 (694 aa).

The tract at residues Met-1 to Arg-21 is disordered. An ATP-binding site is contributed by Tyr-269–Val-280. Positions Asp-527 to Tyr-576 match the FACS motif.

It belongs to the ATP-dependent AMP-binding enzyme family. As to quaternary structure, interacts with FAT1. Requires Mg(2+) as cofactor.

It is found in the lipid droplet. It carries out the reaction a long-chain fatty acid + ATP + CoA = a long-chain fatty acyl-CoA + AMP + diphosphate. The enzyme catalyses (9Z)-hexadecenoate + ATP + CoA = (9Z)-hexadecenoyl-CoA + AMP + diphosphate. It catalyses the reaction (9Z)-octadecenoate + ATP + CoA = (9Z)-octadecenoyl-CoA + AMP + diphosphate. The catalysed reaction is hexadecanoate + ATP + CoA = hexadecanoyl-CoA + AMP + diphosphate. Functionally, activates long-chain fatty acids (LCFA) by esterification of the fatty acids into metabolically active CoA-thioesters for subsequent degradation or incorporation into phospholipids. Also facilitates the transport of LCFAs into the cell, either by active transport or by decreasing the intracellular LCFA concentration. Contributes, with FAA1, to the activation of imported myristate. Also involved in long-chain base (LCB) uptake. In contrast ot LCFA uptake, LCB uptake does not require ATP, suggesting that the enzyme is directly involved in LCB uptake. Involved in the sphingolipid-to-glycerolipid metabolic pathway, converting the sphingolipid metabolite hexadecenoic acid to hexadecenoyl-CoA, which is then further converted to glycerolipids. This chain is Long-chain-fatty-acid--CoA ligase 4 (FAA4), found in Saccharomyces cerevisiae (strain ATCC 204508 / S288c) (Baker's yeast).